The chain runs to 215 residues: Protein N-lysine methyltransferase METTL21A (215 aa).

Residues Trp47, 73 to 75, Asp94, Trp125, and Ala141 contribute to the S-adenosyl-L-methionine site; that span reads GAG.

It belongs to the methyltransferase superfamily. METTL21 family.

Its subcellular location is the cytoplasm. It carries out the reaction L-lysyl-[protein] + 3 S-adenosyl-L-methionine = N(6),N(6),N(6)-trimethyl-L-lysyl-[protein] + 3 S-adenosyl-L-homocysteine + 3 H(+). Its function is as follows. Protein-lysine methyltransferase that selectively trimethylates residues in heat shock protein 70 (HSP70) family members. This chain is Protein N-lysine methyltransferase METTL21A (mettl21a), found in Xenopus tropicalis (Western clawed frog).